We begin with the raw amino-acid sequence, 179 residues long: Large ribosomal subunit protein uL5 (179 aa).

Belongs to the universal ribosomal protein uL5 family. In terms of assembly, part of the 50S ribosomal subunit; part of the 5S rRNA/L5/L18/L25 subcomplex. Contacts the 5S rRNA and the P site tRNA. Forms a bridge to the 30S subunit in the 70S ribosome.

Functionally, this is one of the proteins that bind and probably mediate the attachment of the 5S RNA into the large ribosomal subunit, where it forms part of the central protuberance. In the 70S ribosome it contacts protein S13 of the 30S subunit (bridge B1b), connecting the 2 subunits; this bridge is implicated in subunit movement. Contacts the P site tRNA; the 5S rRNA and some of its associated proteins might help stabilize positioning of ribosome-bound tRNAs. The protein is Large ribosomal subunit protein uL5 of Shewanella amazonensis (strain ATCC BAA-1098 / SB2B).